A 176-amino-acid chain; its full sequence is ATP-dependent protease subunit HslV (176 aa).

Threonine 2 is an active-site residue. Residues glycine 158, cysteine 161, and threonine 164 each coordinate Na(+).

It belongs to the peptidase T1B family. HslV subfamily. In terms of assembly, a double ring-shaped homohexamer of HslV is capped on each side by a ring-shaped HslU homohexamer. The assembly of the HslU/HslV complex is dependent on binding of ATP.

The protein localises to the cytoplasm. It catalyses the reaction ATP-dependent cleavage of peptide bonds with broad specificity.. Its activity is regulated as follows. Allosterically activated by HslU binding. In terms of biological role, protease subunit of a proteasome-like degradation complex believed to be a general protein degrading machinery. The chain is ATP-dependent protease subunit HslV from Pasteurella multocida (strain Pm70).